A 320-amino-acid chain; its full sequence is Putative olfactory receptor 2W5 pseudogene (320 aa).

A glycan (N-linked (GlcNAc...) asparagine) is linked at Asn-5. 4 helical membrane-spanning segments follow: residues 30-50, 58-78, 98-118, and 140-160; these read VILI…LLLV, PMYF…ASIA, VAQL…LVVM, and LCLQ…FIMC. An intrachain disulfide couples Cys-97 to Cys-179. A disordered region spans residues 267-320; sequence LPRSGEVPDSLLHHRHSQHQPPHLHFEEQGCEGDHEETSGVGERGWGASTRGTL. Residues 290 to 304 show a composition bias toward basic and acidic residues; it reads LHFEEQGCEGDHEET.

It belongs to the G-protein coupled receptor 1 family.

It is found in the cell membrane. Functionally, odorant receptor. This is Putative olfactory receptor 2W5 pseudogene from Homo sapiens (Human).